A 187-amino-acid polypeptide reads, in one-letter code: Ribosome-recycling factor (187 aa).

It belongs to the RRF family.

The protein resides in the cytoplasm. Functionally, responsible for the release of ribosomes from messenger RNA at the termination of protein biosynthesis. May increase the efficiency of translation by recycling ribosomes from one round of translation to another. The protein is Ribosome-recycling factor of Paracoccus zeaxanthinifaciens.